An 846-amino-acid chain; its full sequence is Translation initiation factor IF-2 (846 aa).

One can recognise a tr-type G domain in the interval 345-512 (SRAPVVTIMG…AVLLQSEVLE (168 aa)). The G1 stretch occupies residues 354-361 (GHVDHGKT). 354–361 (GHVDHGKT) lines the GTP pocket. The tract at residues 379–383 (GITQH) is G2. The interval 400–403 (DTPG) is G3. GTP is bound by residues 400 to 404 (DTPGH) and 454 to 457 (NKID). Residues 454–457 (NKID) form a G4 region. Residues 490–492 (SAK) are G5.

It belongs to the TRAFAC class translation factor GTPase superfamily. Classic translation factor GTPase family. IF-2 subfamily.

The protein localises to the cytoplasm. In terms of biological role, one of the essential components for the initiation of protein synthesis. Protects formylmethionyl-tRNA from spontaneous hydrolysis and promotes its binding to the 30S ribosomal subunits. Also involved in the hydrolysis of GTP during the formation of the 70S ribosomal complex. The polypeptide is Translation initiation factor IF-2 (Francisella tularensis subsp. holarctica (strain FTNF002-00 / FTA)).